Reading from the N-terminus, the 185-residue chain is Regulatory protein RecX (185 aa).

Belongs to the RecX family.

The protein localises to the cytoplasm. Its function is as follows. Modulates RecA activity. The polypeptide is Regulatory protein RecX (Thermobifida fusca (strain YX)).